Here is a 155-residue protein sequence, read N- to C-terminus: SsrA-binding protein (155 aa).

Basic and acidic residues predominate over residues 135–147; the sequence is TIKRRDQERDIKK. The segment at 135–155 is disordered; the sequence is TIKRRDQERDIKKQMKHYNAR.

It belongs to the SmpB family.

It localises to the cytoplasm. Required for rescue of stalled ribosomes mediated by trans-translation. Binds to transfer-messenger RNA (tmRNA), required for stable association of tmRNA with ribosomes. tmRNA and SmpB together mimic tRNA shape, replacing the anticodon stem-loop with SmpB. tmRNA is encoded by the ssrA gene; the 2 termini fold to resemble tRNA(Ala) and it encodes a 'tag peptide', a short internal open reading frame. During trans-translation Ala-aminoacylated tmRNA acts like a tRNA, entering the A-site of stalled ribosomes, displacing the stalled mRNA. The ribosome then switches to translate the ORF on the tmRNA; the nascent peptide is terminated with the 'tag peptide' encoded by the tmRNA and targeted for degradation. The ribosome is freed to recommence translation, which seems to be the essential function of trans-translation. In Streptococcus pyogenes serotype M12 (strain MGAS2096), this protein is SsrA-binding protein.